The chain runs to 93 residues: Protein translocase subunit SecE (93 aa).

The segment at 1-33 (MTDALGSIDMPDAEDETREKKARKGGKRGKKGP) is disordered. Over residues 20–33 (KKARKGGKRGKKGP) the composition is skewed to basic residues. A helical transmembrane segment spans residues 64-84 (TVVIVFVVIMIGLVTVIDFGF).

This sequence belongs to the SecE/SEC61-gamma family. In terms of assembly, component of the Sec protein translocase complex. Heterotrimer consisting of SecY, SecE and SecG subunits. The heterotrimers can form oligomers, although 1 heterotrimer is thought to be able to translocate proteins. Interacts with the ribosome. Interacts with SecDF, and other proteins may be involved. Interacts with SecA.

It is found in the cell membrane. Essential subunit of the Sec protein translocation channel SecYEG. Clamps together the 2 halves of SecY. May contact the channel plug during translocation. This is Protein translocase subunit SecE from Streptomyces virginiae (Streptomyces cinnamonensis).